Consider the following 228-residue polypeptide: 7-cyano-7-deazaguanine synthase (228 aa).

8 to 18 (LSGGLDSTTCL) contacts ATP. Positions 188, 198, 201, and 204 each coordinate Zn(2+).

The protein belongs to the QueC family. Zn(2+) is required as a cofactor.

The catalysed reaction is 7-carboxy-7-deazaguanine + NH4(+) + ATP = 7-cyano-7-deazaguanine + ADP + phosphate + H2O + H(+). It functions in the pathway purine metabolism; 7-cyano-7-deazaguanine biosynthesis. Catalyzes the ATP-dependent conversion of 7-carboxy-7-deazaguanine (CDG) to 7-cyano-7-deazaguanine (preQ(0)). The polypeptide is 7-cyano-7-deazaguanine synthase (Legionella pneumophila (strain Paris)).